The following is a 235-amino-acid chain: Peroxisomal membrane protein 11C (235 aa).

Over 1-91 the chain is Cytoplasmic; that stretch reads MSTLETTRAE…LPLVLLGKSK (91 aa). The helical transmembrane segment at 92–108 threads the bilayer; it reads NALLSTFLFLDQIVWLG. At 109-206 the chain is on the lumenal side; it reads RTGIYKDKER…LLQLAPKKVT (98 aa). A helical membrane pass occupies residues 207–226; sequence PRVTGAFGFASSLISCYQLL. Residues 227 to 235 lie on the Cytoplasmic side of the membrane; the sequence is PSHPKSKMV.

The protein belongs to the peroxin-11 family. Homooligomer. Interacts with ARC5 and FIS1B on peroxisomes. As to expression, expressed in roots and developing siliques.

Its subcellular location is the peroxisome membrane. In terms of biological role, involved in peroxisomal proliferation. Promotes peroxisomal duplication, aggregation or elongation without fission. This Arabidopsis thaliana (Mouse-ear cress) protein is Peroxisomal membrane protein 11C (PEX11C).